The chain runs to 72 residues: Conotoxin im23a (72 aa).

A signal peptide spans M1–G22. A propeptide spanning residues D23–A28 is cleaved from the precursor. 3 disulfides stabilise this stretch: C34–C41, C45–C55, and C56–C71.

This sequence belongs to the conotoxin K superfamily. As to expression, expressed by the venom duct.

It is found in the secreted. Its function is as follows. Neurotoxin that induces excitatory symptoms in mice following intracranial administration. No symptoms are observed after intraperitoneal and intravenous (tail vein) injections. This chain is Conotoxin im23a, found in Conus imperialis (Imperial cone).